The primary structure comprises 122 residues: Immunoglobulin lambda variable 8-61 (122 aa).

The N-terminal stretch at 1-24 (MSVPTMAWMMLLLGLLAYGSGVDS) is a signal peptide. Residues 25–49 (QTVVTQEPSFSVSPGGTVTLTCGLS) form a framework-1 region. In terms of domain architecture, Ig-like spans 25 to 122 (QTVVTQEPSF…YCVLYMGSGI (98 aa)). Cysteine 46 and cysteine 114 form a disulfide bridge. Positions 50–58 (SGSVSTSYY) are complementarity-determining-1. The framework-2 stretch occupies residues 59–75 (PSWYQQTPGQAPRTLIY). A complementarity-determining-2 region spans residues 76–78 (STN). The segment at 79–114 (TRSSGVPDRFSGSILGNKAALTITGAQADDESDYYC) is framework-3. A complementarity-determining-3 region spans residues 115–122 (VLYMGSGI).

As to quaternary structure, immunoglobulins are composed of two identical heavy chains and two identical light chains; disulfide-linked.

It is found in the secreted. The protein resides in the cell membrane. In terms of biological role, v region of the variable domain of immunoglobulin light chains that participates in the antigen recognition. Immunoglobulins, also known as antibodies, are membrane-bound or secreted glycoproteins produced by B lymphocytes. In the recognition phase of humoral immunity, the membrane-bound immunoglobulins serve as receptors which, upon binding of a specific antigen, trigger the clonal expansion and differentiation of B lymphocytes into immunoglobulins-secreting plasma cells. Secreted immunoglobulins mediate the effector phase of humoral immunity, which results in the elimination of bound antigens. The antigen binding site is formed by the variable domain of one heavy chain, together with that of its associated light chain. Thus, each immunoglobulin has two antigen binding sites with remarkable affinity for a particular antigen. The variable domains are assembled by a process called V-(D)-J rearrangement and can then be subjected to somatic hypermutations which, after exposure to antigen and selection, allow affinity maturation for a particular antigen. The chain is Immunoglobulin lambda variable 8-61 from Homo sapiens (Human).